Consider the following 208-residue polypeptide: Protein-L-isoaspartate O-methyltransferase (208 aa).

Serine 59 is an active-site residue.

The protein belongs to the methyltransferase superfamily. L-isoaspartyl/D-aspartyl protein methyltransferase family.

It localises to the cytoplasm. The enzyme catalyses [protein]-L-isoaspartate + S-adenosyl-L-methionine = [protein]-L-isoaspartate alpha-methyl ester + S-adenosyl-L-homocysteine. Functionally, catalyzes the methyl esterification of L-isoaspartyl residues in peptides and proteins that result from spontaneous decomposition of normal L-aspartyl and L-asparaginyl residues. It plays a role in the repair and/or degradation of damaged proteins. The polypeptide is Protein-L-isoaspartate O-methyltransferase (Proteus mirabilis (strain HI4320)).